A 398-amino-acid chain; its full sequence is Proteasome-activating nucleotidase (398 aa).

A coiled-coil region spans residues 18 to 59 (IMYLKKRIRQLELQVRTLEADKERLERELSRLRMEMSRLRQP). Residues 183–188 (GCGKTL) and H322 contribute to the ATP site. Positions 396–398 (MYG) are docks into pockets in the proteasome alpha-ring to cause gate opening.

This sequence belongs to the AAA ATPase family. As to quaternary structure, homohexamer. The hexameric complex has a two-ring architecture resembling a top hat that caps the 20S proteasome core at one or both ends. Upon ATP-binding, the C-terminus of PAN interacts with the alpha-rings of the proteasome core by binding to the intersubunit pockets.

The protein localises to the cytoplasm. Its function is as follows. ATPase which is responsible for recognizing, binding, unfolding and translocation of substrate proteins into the archaeal 20S proteasome core particle. Is essential for opening the gate of the 20S proteasome via an interaction with its C-terminus, thereby allowing substrate entry and access to the site of proteolysis. Thus, the C-termini of the proteasomal ATPase function like a 'key in a lock' to induce gate opening and therefore regulate proteolysis. Unfolding activity requires energy from ATP hydrolysis, whereas ATP binding alone promotes ATPase-20S proteasome association which triggers gate opening, and supports translocation of unfolded substrates. This is Proteasome-activating nucleotidase from Thermococcus onnurineus (strain NA1).